A 511-amino-acid chain; its full sequence is UDP-N-acetylmuramate--L-alanine ligase (511 aa).

An ATP-binding site is contributed by 127–133; sequence GTHGKTT. The tract at residues 481 to 511 is disordered; that stretch reads VGTVPGGEVGGATTIGGTVPGGSAPGASAAG. A compositionally biased stretch (gly residues) spans 484 to 504; the sequence is VPGGEVGGATTIGGTVPGGSA.

It belongs to the MurCDEF family.

The protein localises to the cytoplasm. It catalyses the reaction UDP-N-acetyl-alpha-D-muramate + L-alanine + ATP = UDP-N-acetyl-alpha-D-muramoyl-L-alanine + ADP + phosphate + H(+). Its pathway is cell wall biogenesis; peptidoglycan biosynthesis. Functionally, cell wall formation. This Salinispora arenicola (strain CNS-205) protein is UDP-N-acetylmuramate--L-alanine ligase.